A 188-amino-acid chain; its full sequence is Fructose-1-phosphate phosphatase YqaB (188 aa).

The Nucleophile role is filled by Asp-11. Residues Asp-11, Asp-13, and Asp-167 each coordinate Mg(2+). Residue 11–13 participates in substrate binding; it reads DMD.

This sequence belongs to the HAD-like hydrolase superfamily. CbbY/CbbZ/Gph/YieH family. The cofactor is Mg(2+). Mn(2+) serves as cofactor. It depends on Co(2+) as a cofactor. Zn(2+) is required as a cofactor.

Functionally, catalyzes strongly the dephosphorylation of fructose-1-phosphate (Fru1P) and slightly the dephosphorylation of 6-phosphogluconate (6P-Glu). It has low beta-phosphoglucomutase activity. The protein is Fructose-1-phosphate phosphatase YqaB (yqaB) of Escherichia coli (strain K12).